The following is a 105-amino-acid chain: Resistin-like beta (105 aa).

The first 23 residues, 1–23, serve as a signal peptide directing secretion; sequence MKPTLCFLFILVSLFPLIVPGNA. Intrachain disulfides connect C49–C102, C61–C101, C70–C87, C72–C89, and C76–C91.

Belongs to the resistin/FIZZ family. In terms of assembly, homodimer; disulfide-linked. Heterodimer with RETNLG. In terms of tissue distribution, strongly expressed in colon, and at lower levels in ileum. In colon, found throughout the crypt and surface epithelium and in goblet cells (at protein level). Specific to the gastrointestinal tract; not detected in other tissues tested.

Its subcellular location is the secreted. Functionally, probable hormone. In Mus musculus (Mouse), this protein is Resistin-like beta (Retnlb).